Consider the following 223-residue polypeptide: Cuticular glutathione peroxidase (223 aa).

The N-terminal stretch at 1 to 19 is a signal peptide; it reads MSAQLLILSHMVLLQLIVA. N39 is a glycosylation site (N-linked (GlcNAc...) asparagine). Residue C74 is part of the active site. The N-linked (GlcNAc...) asparagine glycan is linked to N92.

This sequence belongs to the glutathione peroxidase family. As to quaternary structure, homotetramer.

Its subcellular location is the secreted. The enzyme catalyses 2 glutathione + H2O2 = glutathione disulfide + 2 H2O. Functionally, could inhibit the oxidative burst of leukocytes and neutralize the secondary products of lipid peroxidation, thus providing the resistance of these parasites to immune effector mechanisms and their persistence in the mammalian host. It may also be involved in the formation of cross-linking residues such as dityrosine, trityrosine and isotrityrosine identified in cuticular collagen. Highly cross-linked external cortex may also serve to protect the parasite from immune attack. This is Cuticular glutathione peroxidase from Brugia malayi (Filarial nematode worm).